We begin with the raw amino-acid sequence, 228 residues long: DNA mismatch repair protein MutH (228 aa).

Belongs to the MutH family.

Its subcellular location is the cytoplasm. Functionally, sequence-specific endonuclease that cleaves unmethylated GATC sequences. It is involved in DNA mismatch repair. The protein is DNA mismatch repair protein MutH of Yersinia enterocolitica serotype O:8 / biotype 1B (strain NCTC 13174 / 8081).